A 173-amino-acid polypeptide reads, in one-letter code: Bifunctional protein PyrR (173 aa).

Residues Ile93–Thr105 carry the PRPP-binding motif.

The protein belongs to the purine/pyrimidine phosphoribosyltransferase family. PyrR subfamily. Homodimer and homohexamer; in equilibrium.

It carries out the reaction UMP + diphosphate = 5-phospho-alpha-D-ribose 1-diphosphate + uracil. Regulates transcriptional attenuation of the pyrimidine nucleotide (pyr) operon by binding in a uridine-dependent manner to specific sites on pyr mRNA. This disrupts an antiterminator hairpin in the RNA and favors formation of a downstream transcription terminator, leading to a reduced expression of downstream genes. Functionally, also displays a weak uracil phosphoribosyltransferase activity which is not physiologically significant. This is Bifunctional protein PyrR from Streptococcus agalactiae serotype Ia (strain ATCC 27591 / A909 / CDC SS700).